Here is a 211-residue protein sequence, read N- to C-terminus: Secreted phosphoprotein 24 (211 aa).

Residues 1 to 29 (MISRMEKMTMMMKILIMFALGMNYWSCSG) form the signal peptide. 2 cysteine pairs are disulfide-bonded: C92/C103 and C116/C134. At S96 the chain carries Phosphoserine. S145, S146, S170, S173, and S182 each carry phosphoserine.

This sequence belongs to the SPP2 family. Phosphorylation sites are present in the extracellular medium. Detected in liver and plasma.

It localises to the secreted. In terms of biological role, could coordinate an aspect of bone turnover. This Homo sapiens (Human) protein is Secreted phosphoprotein 24 (SPP2).